A 306-amino-acid chain; its full sequence is MPETGQESSNPPAKESPFSIKSLLTCEPSRAVRPHKALFTPIKGALDGAAFALSPLTDLTFPRLEIPAQRFALPAHYLERSPAWWYSYTLAHGGHTPRTEVPDKSLLLGPTSPVSGGERDSPEPIHPLKAELEAKDSESKSPEEIILEESEPEEGKKDDSGEDWKKREESPDKKPCRKKKTRTVFSRSQVFQLESTFDMKRYLSSSERAGLAASLHLTETQVKIWFQNRRNKWKRQLAAELEAANLSHAAAQRIVRVPILYHENSSSAESASSAANVPVSQPLLTFPHPVYYSHPVVTSVPLLRPV.

Residues 95–181 (HTPRTEVPDK…DKKPCRKKKT (87 aa)) form a disordered region. Basic and acidic residues-rich tracts occupy residues 117–143 (GERDSPEPIHPLKAELEAKDSESKSPE) and 153–174 (EEGKKDDSGEDWKKREESPDKK). A DNA-binding region (homeobox) is located at residues 178–237 (KKKTRTVFSRSQVFQLESTFDMKRYLSSSERAGLAASLHLTETQVKIWFQNRRNKWKRQL).

This sequence belongs to the HMX homeobox family.

The protein resides in the nucleus. Transcription factor involved in specification of neuronal cell types and which is required for inner ear and hypothalamus development. Binds to the 5'-CAAGTG-3' core sequence. May act as a stage-specific inhibitor of anf1 in the anterior neural plate during the development. The polypeptide is Homeobox protein HMX3 (hmx3) (Xenopus tropicalis (Western clawed frog)).